The following is a 144-amino-acid chain: Large ribosomal subunit protein uL11 (144 aa).

The protein belongs to the universal ribosomal protein uL11 family. As to quaternary structure, part of the ribosomal stalk of the 50S ribosomal subunit. Interacts with L10 and the large rRNA to form the base of the stalk. L10 forms an elongated spine to which L12 dimers bind in a sequential fashion forming a multimeric L10(L12)X complex. Post-translationally, one or more lysine residues are methylated.

Functionally, forms part of the ribosomal stalk which helps the ribosome interact with GTP-bound translation factors. The chain is Large ribosomal subunit protein uL11 from Gluconobacter oxydans (strain 621H) (Gluconobacter suboxydans).